Consider the following 172-residue polypeptide: Adenine phosphoribosyltransferase (172 aa).

This sequence belongs to the purine/pyrimidine phosphoribosyltransferase family. As to quaternary structure, homodimer.

The protein resides in the cytoplasm. The enzyme catalyses AMP + diphosphate = 5-phospho-alpha-D-ribose 1-diphosphate + adenine. Its pathway is purine metabolism; AMP biosynthesis via salvage pathway; AMP from adenine: step 1/1. In terms of biological role, catalyzes a salvage reaction resulting in the formation of AMP, that is energically less costly than de novo synthesis. The chain is Adenine phosphoribosyltransferase from Nostoc punctiforme (strain ATCC 29133 / PCC 73102).